A 621-amino-acid polypeptide reads, in one-letter code: Chaperone protein DnaK (621 aa).

The residue at position 175 (T175) is a Phosphothreonine; by autocatalysis. Positions 499–516 (EAHEADDKKRKEDAETRN) are enriched in basic and acidic residues. 2 disordered regions span residues 499–520 (EAHE…NAEN) and 583–621 (AQQG…KDNK). The segment covering 583–602 (AQQGAEGAAGAADSGSANNG) has biased composition (low complexity). The segment covering 603-621 (GDDDVVDAEVVDDDDKDNK) has biased composition (acidic residues).

Belongs to the heat shock protein 70 family.

Functionally, acts as a chaperone. In Bifidobacterium animalis subsp. lactis (strain AD011), this protein is Chaperone protein DnaK.